The chain runs to 270 residues: Glutamate racemase (270 aa).

Residues 10–11 (DS) and 42–43 (YG) each bind substrate. Cys-74 serves as the catalytic Proton donor/acceptor. 75–76 (NT) is a binding site for substrate. The active-site Proton donor/acceptor is the Cys-189. 190–191 (TH) is a binding site for substrate.

Belongs to the aspartate/glutamate racemases family.

The catalysed reaction is L-glutamate = D-glutamate. Its pathway is cell wall biogenesis; peptidoglycan biosynthesis. In terms of biological role, provides the (R)-glutamate required for cell wall biosynthesis. This Bartonella henselae (strain ATCC 49882 / DSM 28221 / CCUG 30454 / Houston 1) (Rochalimaea henselae) protein is Glutamate racemase.